The primary structure comprises 530 residues: Membrane-bound lytic murein transglycosylase F (530 aa).

The signal sequence occupies residues 1–27 (MTPFAYKLPIRALWLGLLSLLLVGCQI). The non-LT domain stretch occupies residues 28-279 (DSEPKSELEK…SLEEKYIGHI (252 aa)). Residues 280-530 (GAFDYVDTRA…SAKPSTESKN (251 aa)) form an LT domain region. Residue glutamate 324 is part of the active site. Residues 505–530 (ALESESLENSESSAEPSAKPSTESKN) are disordered. Low complexity predominate over residues 513-530 (NSESSAEPSAKPSTESKN).

It in the N-terminal section; belongs to the bacterial solute-binding protein 3 family. In the C-terminal section; belongs to the transglycosylase Slt family.

The protein localises to the cell outer membrane. The catalysed reaction is Exolytic cleavage of the (1-&gt;4)-beta-glycosidic linkage between N-acetylmuramic acid (MurNAc) and N-acetylglucosamine (GlcNAc) residues in peptidoglycan, from either the reducing or the non-reducing ends of the peptidoglycan chains, with concomitant formation of a 1,6-anhydrobond in the MurNAc residue.. In terms of biological role, murein-degrading enzyme that degrades murein glycan strands and insoluble, high-molecular weight murein sacculi, with the concomitant formation of a 1,6-anhydromuramoyl product. Lytic transglycosylases (LTs) play an integral role in the metabolism of the peptidoglycan (PG) sacculus. Their lytic action creates space within the PG sacculus to allow for its expansion as well as for the insertion of various structures such as secretion systems and flagella. This Vibrio cholerae serotype O1 (strain ATCC 39541 / Classical Ogawa 395 / O395) protein is Membrane-bound lytic murein transglycosylase F.